The chain runs to 145 residues: Ribosomal RNA large subunit methyltransferase H (145 aa).

Residues Leu-64, Gly-93, and 112–117 (LSALTF) each bind S-adenosyl-L-methionine.

This sequence belongs to the RNA methyltransferase RlmH family. In terms of assembly, homodimer.

The protein localises to the cytoplasm. It catalyses the reaction pseudouridine(1915) in 23S rRNA + S-adenosyl-L-methionine = N(3)-methylpseudouridine(1915) in 23S rRNA + S-adenosyl-L-homocysteine + H(+). Functionally, specifically methylates the pseudouridine at position 1915 (m3Psi1915) in 23S rRNA. This chain is Ribosomal RNA large subunit methyltransferase H, found in Prochlorococcus marinus (strain SARG / CCMP1375 / SS120).